A 131-amino-acid chain; its full sequence is Small ribosomal subunit protein eS24 (131 aa).

At M1 the chain carries N-acetylmethionine. T9 carries the post-translational modification Phosphothreonine. K37 is covalently cross-linked (Glycyl lysine isopeptide (Lys-Gly) (interchain with G-Cter in SUMO2)). Residues 90–100 are compositionally biased toward basic and acidic residues; sequence RLARHGLYEKK. A disordered region spans residues 90-131; that stretch reads RLARHGLYEKKKTSRKQRKERKNRMKKVRGTAKANVGAGKKK. Positions 101–119 are enriched in basic residues; it reads KTSRKQRKERKNRMKKVRG.

The protein belongs to the eukaryotic ribosomal protein eS24 family. As to quaternary structure, component of the small ribosomal subunit. Part of the small subunit (SSU) processome, composed of more than 70 proteins and the RNA chaperone small nucleolar RNA (snoRNA) U3.

The protein localises to the cytoplasm. Its subcellular location is the nucleus. The protein resides in the nucleolus. Its function is as follows. Component of the small ribosomal subunit. The ribosome is a large ribonucleoprotein complex responsible for the synthesis of proteins in the cell. Required for processing of pre-rRNA and maturation of 40S ribosomal subunits. Part of the small subunit (SSU) processome, first precursor of the small eukaryotic ribosomal subunit. During the assembly of the SSU processome in the nucleolus, many ribosome biogenesis factors, an RNA chaperone and ribosomal proteins associate with the nascent pre-rRNA and work in concert to generate RNA folding, modifications, rearrangements and cleavage as well as targeted degradation of pre-ribosomal RNA by the RNA exosome. This is Small ribosomal subunit protein eS24 (RPS24) from Pongo abelii (Sumatran orangutan).